We begin with the raw amino-acid sequence, 76 residues long: UPF0154 protein LCA_1273 (76 aa).

The chain crosses the membrane as a helical span at residues 3–23 (IGIGVLIFVIGALLGAVAGFF). The interval 55–76 (PSEKKLNQMMSSMKAQQKRSKK) is disordered.

This sequence belongs to the UPF0154 family.

It localises to the cell membrane. The protein is UPF0154 protein LCA_1273 of Latilactobacillus sakei subsp. sakei (strain 23K) (Lactobacillus sakei subsp. sakei).